The chain runs to 1064 residues: mRNA 3'-end-processing protein RNA14 (1064 aa).

2 disordered regions span residues 34–106 (ASQS…APSA) and 119–192 (SETP…ASAV). Positions 44–54 (AQDQKSHSTLL) are enriched in polar residues. 2 stretches are compositionally biased toward low complexity: residues 66-86 (SAIP…AIGD) and 151-191 (QPAE…AASA). 5 HAT repeats span residues 327 to 364 (SNFA…YIRR), 377 to 412 (DVRS…FVAS), 423 to 456 (AKND…FESS), 673 to 706 (QRGA…FARR), and 777 to 811 (NDDN…YEYT). 2 disordered regions span residues 888 to 985 (AVPT…DRSG) and 1022 to 1064 (LPGA…SGRY). Composition is skewed to basic and acidic residues over residues 899-910 (SYKRPAPEDIPP) and 933-948 (RYPE…RYRD). A compositionally biased stretch (pro residues) spans 1026-1042 (GMPPAPPISRGPPPPPM).

It localises to the nucleus. Its subcellular location is the cytoplasm. Component of the cleavage factor IA (CFIA) complex, which is involved in the endonucleolytic cleavage during polyadenylation-dependent pre-mRNA 3'-end formation. The sequence is that of mRNA 3'-end-processing protein RNA14 (RNA14) from Cryptococcus neoformans var. neoformans serotype D (strain B-3501A) (Filobasidiella neoformans).